Here is a 489-residue protein sequence, read N- to C-terminus: Betaine aldehyde dehydrogenase (489 aa).

Residues threonine 26 and aspartate 93 each coordinate K(+). Glycine 150–tryptophan 152 lines the NAD(+) pocket. Lysine 162 functions as the Charge relay system in the catalytic mechanism. Lysine 176–glutamate 179 is a binding site for NAD(+). Valine 180 provides a ligand contact to K(+). Glycine 229–threonine 232 contributes to the NAD(+) binding site. Residue leucine 245 coordinates K(+). The active-site Proton acceptor is glutamate 251. Residues glycine 253, cysteine 285, and glutamate 386 each contribute to the NAD(+) site. Cysteine 285 functions as the Nucleophile in the catalytic mechanism. Cysteine 285 bears the Cysteine sulfenic acid (-SOH) mark. The K(+) site is built by lysine 456 and glycine 459. Residue glutamate 463 is the Charge relay system of the active site.

Belongs to the aldehyde dehydrogenase family. Dimer of dimers. Requires K(+) as cofactor.

The catalysed reaction is betaine aldehyde + NAD(+) + H2O = glycine betaine + NADH + 2 H(+). Its pathway is amine and polyamine biosynthesis; betaine biosynthesis via choline pathway; betaine from betaine aldehyde: step 1/1. Involved in the biosynthesis of the osmoprotectant glycine betaine. Catalyzes the irreversible oxidation of betaine aldehyde to the corresponding acid. This Burkholderia ambifaria (strain MC40-6) protein is Betaine aldehyde dehydrogenase.